A 591-amino-acid chain; its full sequence is Aspartate--tRNA(Asp/Asn) ligase (591 aa).

Glu-170 provides a ligand contact to L-aspartate. The segment at 194–197 (QLFK) is aspartate. An L-aspartate-binding site is contributed by Arg-216. ATP is bound by residues 216–218 (RDE) and Gln-225. His-448 provides a ligand contact to L-aspartate. Position 482 (Glu-482) interacts with ATP. Arg-489 serves as a coordination point for L-aspartate. 534–537 (GWDR) lines the ATP pocket. The segment at 559–591 (GGVDPLTDAPAPITEQQRKESGIDVKPEPSKPH) is disordered. Over residues 574–591 (QQRKESGIDVKPEPSKPH) the composition is skewed to basic and acidic residues.

Belongs to the class-II aminoacyl-tRNA synthetase family. Type 1 subfamily. Homodimer.

The protein localises to the cytoplasm. The catalysed reaction is tRNA(Asx) + L-aspartate + ATP = L-aspartyl-tRNA(Asx) + AMP + diphosphate. Its function is as follows. Aspartyl-tRNA synthetase with relaxed tRNA specificity since it is able to aspartylate not only its cognate tRNA(Asp) but also tRNA(Asn). Reaction proceeds in two steps: L-aspartate is first activated by ATP to form Asp-AMP and then transferred to the acceptor end of tRNA(Asp/Asn). The protein is Aspartate--tRNA(Asp/Asn) ligase of Mycolicibacterium paratuberculosis (strain ATCC BAA-968 / K-10) (Mycobacterium paratuberculosis).